Here is a 270-residue protein sequence, read N- to C-terminus: Monofunctional glycosyltransferase (270 aa).

The span at 1 to 10 (MKRSQRMNNS) shows a compositional bias: polar residues. The segment at 1 to 36 (MKRSQRMNNSPERHSQYRNEPHYNTYYQPVGKPPKK) is disordered. Residues 11 to 21 (PERHSQYRNEP) are compositionally biased toward basic and acidic residues. Residues 42–62 (IFLRLFIIFVFIYALFIGLMY) form a helical membrane-spanning segment.

This sequence belongs to the glycosyltransferase 51 family.

The protein localises to the cell membrane. The catalysed reaction is [GlcNAc-(1-&gt;4)-Mur2Ac(oyl-L-Ala-gamma-D-Glu-L-Lys-D-Ala-D-Ala)](n)-di-trans,octa-cis-undecaprenyl diphosphate + beta-D-GlcNAc-(1-&gt;4)-Mur2Ac(oyl-L-Ala-gamma-D-Glu-L-Lys-D-Ala-D-Ala)-di-trans,octa-cis-undecaprenyl diphosphate = [GlcNAc-(1-&gt;4)-Mur2Ac(oyl-L-Ala-gamma-D-Glu-L-Lys-D-Ala-D-Ala)](n+1)-di-trans,octa-cis-undecaprenyl diphosphate + di-trans,octa-cis-undecaprenyl diphosphate + H(+). It functions in the pathway cell wall biogenesis; peptidoglycan biosynthesis. Functionally, peptidoglycan polymerase that catalyzes glycan chain elongation using lipid-linked disaccharide-pentapeptide as the substrate. This is Monofunctional glycosyltransferase from Staphylococcus haemolyticus (strain JCSC1435).